A 918-amino-acid chain; its full sequence is Isoleucine--tRNA ligase (918 aa).

Positions 59–69 match the 'HIGH' region motif; sequence PYANGHLHIGH. Glu570 contacts L-isoleucyl-5'-AMP. The short motif at 611–615 is the 'KMSKS' region element; sequence KMSKS. Lys614 lines the ATP pocket. Residues Cys893, Cys896, Cys908, and Cys911 each coordinate Zn(2+).

This sequence belongs to the class-I aminoacyl-tRNA synthetase family. IleS type 1 subfamily. As to quaternary structure, monomer. It depends on Zn(2+) as a cofactor.

The protein resides in the cytoplasm. It catalyses the reaction tRNA(Ile) + L-isoleucine + ATP = L-isoleucyl-tRNA(Ile) + AMP + diphosphate. In terms of biological role, catalyzes the attachment of isoleucine to tRNA(Ile). As IleRS can inadvertently accommodate and process structurally similar amino acids such as valine, to avoid such errors it has two additional distinct tRNA(Ile)-dependent editing activities. One activity is designated as 'pretransfer' editing and involves the hydrolysis of activated Val-AMP. The other activity is designated 'posttransfer' editing and involves deacylation of mischarged Val-tRNA(Ile). The polypeptide is Isoleucine--tRNA ligase (Campylobacter concisus (strain 13826)).